The primary structure comprises 799 residues: LPS-assembly protein LptD (799 aa).

Residues 1–34 (MMHELDLRPHLARFAQRPLALLAWALLQGTSVNA) form the signal peptide.

It belongs to the LptD family. As to quaternary structure, component of the lipopolysaccharide transport and assembly complex. Interacts with LptE and LptA.

Its subcellular location is the cell outer membrane. Together with LptE, is involved in the assembly of lipopolysaccharide (LPS) at the surface of the outer membrane. This chain is LPS-assembly protein LptD, found in Albidiferax ferrireducens (strain ATCC BAA-621 / DSM 15236 / T118) (Rhodoferax ferrireducens).